We begin with the raw amino-acid sequence, 402 residues long: Dynactin subunit 2 (402 aa).

Positions 1 to 26 (MADPKYADLPGIARNEPDVYETSDLP) are disordered. Coiled coils occupy residues 101-132 (PQQR…SAAE) and 357-402 (VHLD…KRLQ).

The protein belongs to the dynactin subunit 2 family. In terms of assembly, subunit of dynactin, a multiprotein complex part of a tripartite complex with dynein and a adapter, such as BICDL1, BICD2 or HOOK3. The dynactin complex is built around ACTR1A/ACTB filament and consists of an actin-related filament composed of a shoulder domain, a pointed end and a barbed end. Its length is defined by its flexible shoulder domain. The soulder is composed of 2 DCTN1 subunits, 4 DCTN2 and 2 DCTN3.

Its subcellular location is the cytoplasm. The protein resides in the cytoskeleton. It is found in the microtubule organizing center. The protein localises to the centrosome. It localises to the membrane. In terms of biological role, part of the dynactin complex that activates the molecular motor dynein for ultra-processive transport along microtubules. In the dynactin soulder domain, binds the ACTR1A filament and acts as a molecular ruler to determine the length. Modulates cytoplasmic dynein binding to an organelle, and plays a role in prometaphase chromosome alignment and spindle organization during mitosis. Involved in anchoring microtubules to centrosomes. This Gallus gallus (Chicken) protein is Dynactin subunit 2 (DCTN2).